The primary structure comprises 873 residues: DNA helicase/primase complex-associated protein (873 aa).

Residues 394–422 (PPLPRDDGDGENNVVEVSSSTGGAHPPSD) are disordered.

The protein belongs to the herpesviridae HEPA family. As to quaternary structure, associates with the primase and the helicase to form the helicase-primase complex. Interacts with the origin-binding protein. Interacts with the polymerase catalytic subunit.

Its subcellular location is the host nucleus. Its function is as follows. Component of the helicase/primase complex. Unwinds the DNA at the replication forks and generates single-stranded DNA for both leading and lagging strand synthesis. The primase synthesizes short RNA primers on the lagging strand that the polymerase presumably elongates using dNTPs. The primase-associated factor has no known catalytic activity in the complex and may serve to facilitate the formation of the replisome by directly interacting with the origin-binding protein and the polymerase. This is DNA helicase/primase complex-associated protein (UL102) from Human cytomegalovirus (strain Merlin) (HHV-5).